Here is a 362-residue protein sequence, read N- to C-terminus: Peptide chain release factor 1 (362 aa).

An N5-methylglutamine modification is found at Q232.

It belongs to the prokaryotic/mitochondrial release factor family. Methylated by PrmC. Methylation increases the termination efficiency of RF1.

It is found in the cytoplasm. Functionally, peptide chain release factor 1 directs the termination of translation in response to the peptide chain termination codons UAG and UAA. This chain is Peptide chain release factor 1, found in Myxococcus xanthus.